The primary structure comprises 336 residues: Casein kinase II subunit alpha (336 aa).

The Protein kinase domain occupies 32 to 317 (YEVVRKIGRG…AKEAMAHPYF (286 aa)). ATP-binding positions include 38 to 46 (IGRGKYSEV) and Lys61. The active-site Proton acceptor is the Asp149.

It belongs to the protein kinase superfamily. Ser/Thr protein kinase family. CK2 subfamily. In terms of assembly, tetramer composed of two alpha chains, one beta chain and one beta' chain.

It carries out the reaction L-seryl-[protein] + ATP = O-phospho-L-seryl-[protein] + ADP + H(+). It catalyses the reaction L-threonyl-[protein] + ATP = O-phospho-L-threonyl-[protein] + ADP + H(+). In terms of biological role, catalytic subunit of a constitutively active serine/threonine-protein kinase complex that phosphorylates a large number of substrates containing acidic residues C-terminal to the phosphorylated serine or threonine. Phosphorylates the frq clock protein thus regulating the circadian clock. The sequence is that of Casein kinase II subunit alpha (cka) from Neurospora crassa (strain ATCC 24698 / 74-OR23-1A / CBS 708.71 / DSM 1257 / FGSC 987).